The chain runs to 248 residues: Ribonuclease PH (248 aa).

Phosphate is bound by residues Arg86 and 124-126; that span reads GTR.

Belongs to the RNase PH family. Homohexameric ring arranged as a trimer of dimers.

The enzyme catalyses tRNA(n+1) + phosphate = tRNA(n) + a ribonucleoside 5'-diphosphate. In terms of biological role, phosphorolytic 3'-5' exoribonuclease that plays an important role in tRNA 3'-end maturation. Removes nucleotide residues following the 3'-CCA terminus of tRNAs; can also add nucleotides to the ends of RNA molecules by using nucleoside diphosphates as substrates, but this may not be physiologically important. Probably plays a role in initiation of 16S rRNA degradation (leading to ribosome degradation) during starvation. The sequence is that of Ribonuclease PH from Listeria welshimeri serovar 6b (strain ATCC 35897 / DSM 20650 / CCUG 15529 / CIP 8149 / NCTC 11857 / SLCC 5334 / V8).